The following is a 62-amino-acid chain: Zinc metalloproteinase-disintegrin-like BaG (62 aa).

The region spanning 24-54 is the Peptidase M12B domain; that stretch reads KTDLLNRSHDNAQLSPINLVVAVIMAHEMGH. Residue N29 is glycosylated (N-linked (GlcNAc...) asparagine). H50 is a Zn(2+) binding site. E51 is an active-site residue. H54 contributes to the Zn(2+) binding site.

It belongs to the venom metalloproteinase (M12B) family. P-III subfamily. P-IIIc sub-subfamily. Dimer. Zn(2+) serves as cofactor. Post-translationally, the N-terminus is blocked. Expressed by the venom gland.

It localises to the secreted. Inhibited by EDTA, and 1,10-phenanthroline. Snake venom Zinc metalloproteinase that inhibits ADP-induced platelet aggregation and inhibits the alpha-5/beta-1 (ITGA5/ITGB1) integrin, a fibronectin receptor. Has caseinolytic activity. Induces the detachment of cells that are bound to fibronectin. This is Zinc metalloproteinase-disintegrin-like BaG from Bothrops alternatus (Urutu).